The following is a 656-amino-acid chain: tRNA 5-methylaminomethyl-2-thiouridine biosynthesis bifunctional protein MnmC (656 aa).

The segment at 1-236 (MTDPLIPAVL…KRAMLVGHFA (236 aa)) is tRNA (mnm(5)s(2)U34)-methyltransferase. Residues 260–656 (IGAGLAGCAV…LRALRQGAVS (397 aa)) are FAD-dependent cmnm(5)s(2)U34 oxidoreductase.

It in the N-terminal section; belongs to the methyltransferase superfamily. tRNA (mnm(5)s(2)U34)-methyltransferase family. The protein in the C-terminal section; belongs to the DAO family. Requires FAD as cofactor.

It is found in the cytoplasm. It carries out the reaction 5-aminomethyl-2-thiouridine(34) in tRNA + S-adenosyl-L-methionine = 5-methylaminomethyl-2-thiouridine(34) in tRNA + S-adenosyl-L-homocysteine + H(+). Catalyzes the last two steps in the biosynthesis of 5-methylaminomethyl-2-thiouridine (mnm(5)s(2)U) at the wobble position (U34) in tRNA. Catalyzes the FAD-dependent demodification of cmnm(5)s(2)U34 to nm(5)s(2)U34, followed by the transfer of a methyl group from S-adenosyl-L-methionine to nm(5)s(2)U34, to form mnm(5)s(2)U34. In Paraburkholderia phytofirmans (strain DSM 17436 / LMG 22146 / PsJN) (Burkholderia phytofirmans), this protein is tRNA 5-methylaminomethyl-2-thiouridine biosynthesis bifunctional protein MnmC.